The following is a 159-amino-acid chain: Ribosomal RNA large subunit methyltransferase H (159 aa).

S-adenosyl-L-methionine contacts are provided by residues Ile-75, Gly-108, and 127-132 (FGRMTL).

It belongs to the RNA methyltransferase RlmH family. Homodimer.

The protein resides in the cytoplasm. It catalyses the reaction pseudouridine(1915) in 23S rRNA + S-adenosyl-L-methionine = N(3)-methylpseudouridine(1915) in 23S rRNA + S-adenosyl-L-homocysteine + H(+). In terms of biological role, specifically methylates the pseudouridine at position 1915 (m3Psi1915) in 23S rRNA. This Lactococcus lactis subsp. lactis (strain IL1403) (Streptococcus lactis) protein is Ribosomal RNA large subunit methyltransferase H.